The following is a 598-amino-acid chain: UvrABC system protein C (598 aa).

In terms of domain architecture, GIY-YIG spans 14-91 (DQPGCYLMKD…IHKNNPKYNI (78 aa)). Positions 196 to 231 (TEIQDRLQEKMAYAAAHMEFEKAAEFRDQIKAIETV) constitute a UVR domain.

The protein belongs to the UvrC family. As to quaternary structure, interacts with UvrB in an incision complex.

The protein resides in the cytoplasm. Functionally, the UvrABC repair system catalyzes the recognition and processing of DNA lesions. UvrC both incises the 5' and 3' sides of the lesion. The N-terminal half is responsible for the 3' incision and the C-terminal half is responsible for the 5' incision. The polypeptide is UvrABC system protein C (Enterococcus faecalis (strain ATCC 700802 / V583)).